Consider the following 389-residue polypeptide: Histidinol-phosphate aminotransferase (389 aa).

Lys233 is modified (N6-(pyridoxal phosphate)lysine).

This sequence belongs to the class-II pyridoxal-phosphate-dependent aminotransferase family. Requires pyridoxal 5'-phosphate as cofactor.

The catalysed reaction is L-histidinol phosphate + 2-oxoglutarate = 3-(imidazol-4-yl)-2-oxopropyl phosphate + L-glutamate. It functions in the pathway amino-acid biosynthesis; L-histidine biosynthesis; L-histidine from 5-phospho-alpha-D-ribose 1-diphosphate: step 7/9. The protein is Histidinol-phosphate aminotransferase (HIS5) of Candida maltosa (Yeast).